The chain runs to 488 residues: MSFNHKTIEELHDLLVAKEISATELTQKTLEDIKSREEAVGSFITVSEEAALKQAAAIDAKGIDADNLMSGIPLAVKDNISTKSILTTAASKMLYNYEPIFDATSVANAYAKDMIVIGKTNMDEFAMGGSTETSYFKKTKNAWDHTKVPGGSSGGSATAVASGQVRLSLGSDTGGSIRQPAAFNGVVGLKPTYGTVSRYGLIAFGSSLDQIGPFAPTVKENAQLLNVIASSDVKDATSAPVRIADYTSKIGRDIKGMKIALPKEYLGEGIDPEIKETVLAAAKQFEALGATVEEVSLPHSKYGVAVYYIIASSEASSNLQRFDGIRYGFRADDAKNLDEIYVNTRSQGFGDEVKRRIMLGTFSLSSGYYDAYFKKAGQVRTLIIEDFDKVFADYDLILGPTTPTVAFGLDTLNHDPVAMYLADLLTIPVNLAGLPGISIPAGFVDGLPVGLQLIGPKYTEETIYQAAAAFEAVTDYHKQQPIIFGGDK.

Catalysis depends on charge relay system residues Lys77 and Ser152. The active-site Acyl-ester intermediate is Ser176.

It belongs to the amidase family. GatA subfamily. In terms of assembly, heterotrimer of A, B and C subunits.

It catalyses the reaction L-glutamyl-tRNA(Gln) + L-glutamine + ATP + H2O = L-glutaminyl-tRNA(Gln) + L-glutamate + ADP + phosphate + H(+). In terms of biological role, allows the formation of correctly charged Gln-tRNA(Gln) through the transamidation of misacylated Glu-tRNA(Gln) in organisms which lack glutaminyl-tRNA synthetase. The reaction takes place in the presence of glutamine and ATP through an activated gamma-phospho-Glu-tRNA(Gln). This Streptococcus pyogenes serotype M49 (strain NZ131) protein is Glutamyl-tRNA(Gln) amidotransferase subunit A.